The primary structure comprises 299 residues: NAD kinase (299 aa).

The active-site Proton acceptor is the Asp71. Residues 71 to 72 (DG), 145 to 146 (ND), Arg173, Asp175, 186 to 191 (TAYALS), Ala210, and Gln248 each bind NAD(+).

It belongs to the NAD kinase family. A divalent metal cation serves as cofactor.

The protein resides in the cytoplasm. The enzyme catalyses NAD(+) + ATP = ADP + NADP(+) + H(+). In terms of biological role, involved in the regulation of the intracellular balance of NAD and NADP, and is a key enzyme in the biosynthesis of NADP. Catalyzes specifically the phosphorylation on 2'-hydroxyl of the adenosine moiety of NAD to yield NADP. This chain is NAD kinase, found in Bordetella avium (strain 197N).